A 571-amino-acid polypeptide reads, in one-letter code: 2-succinyl-5-enolpyruvyl-6-hydroxy-3-cyclohexene-1-carboxylate synthase (571 aa).

This sequence belongs to the TPP enzyme family. MenD subfamily. In terms of assembly, homodimer. The cofactor is Mg(2+). Requires Mn(2+) as cofactor. Thiamine diphosphate serves as cofactor.

The enzyme catalyses isochorismate + 2-oxoglutarate + H(+) = 5-enolpyruvoyl-6-hydroxy-2-succinyl-cyclohex-3-ene-1-carboxylate + CO2. It participates in quinol/quinone metabolism; 1,4-dihydroxy-2-naphthoate biosynthesis; 1,4-dihydroxy-2-naphthoate from chorismate: step 2/7. It functions in the pathway quinol/quinone metabolism; menaquinone biosynthesis. Catalyzes the thiamine diphosphate-dependent decarboxylation of 2-oxoglutarate and the subsequent addition of the resulting succinic semialdehyde-thiamine pyrophosphate anion to isochorismate to yield 2-succinyl-5-enolpyruvyl-6-hydroxy-3-cyclohexene-1-carboxylate (SEPHCHC). In Vibrio parahaemolyticus serotype O3:K6 (strain RIMD 2210633), this protein is 2-succinyl-5-enolpyruvyl-6-hydroxy-3-cyclohexene-1-carboxylate synthase.